The following is a 1400-amino-acid chain: DNA-directed RNA polymerase subunit beta' (1400 aa).

The Zn(2+) site is built by Cys-70, Cys-72, Cys-85, and Cys-88. The Mg(2+) site is built by Asp-460, Asp-462, and Asp-464. Zn(2+)-binding residues include Cys-814, Cys-888, Cys-895, and Cys-898.

It belongs to the RNA polymerase beta' chain family. The RNAP catalytic core consists of 2 alpha, 1 beta, 1 beta' and 1 omega subunit. When a sigma factor is associated with the core the holoenzyme is formed, which can initiate transcription. Mg(2+) serves as cofactor. It depends on Zn(2+) as a cofactor.

The catalysed reaction is RNA(n) + a ribonucleoside 5'-triphosphate = RNA(n+1) + diphosphate. In terms of biological role, DNA-dependent RNA polymerase catalyzes the transcription of DNA into RNA using the four ribonucleoside triphosphates as substrates. The sequence is that of DNA-directed RNA polymerase subunit beta' from Methylococcus capsulatus (strain ATCC 33009 / NCIMB 11132 / Bath).